Reading from the N-terminus, the 411-residue chain is E3 ubiquitin-protein ligase PUB23 (411 aa).

The U-box domain maps to 11–86 (EIPPFFLCPI…QSWCTLNASY (76 aa)). ARM repeat units follow at residues 132–173 (ATNK…HLET), 175–203 (ETVLKNLLNNKKDNNIVKSLTKIMQRGMY), 221–261 (DPMQ…NICP), and 263–306 (GRNR…LLCQ).

Interacts with RPN12A. Post-translationally, auto-ubiquitinated.

The protein localises to the cytoplasm. It carries out the reaction S-ubiquitinyl-[E2 ubiquitin-conjugating enzyme]-L-cysteine + [acceptor protein]-L-lysine = [E2 ubiquitin-conjugating enzyme]-L-cysteine + N(6)-ubiquitinyl-[acceptor protein]-L-lysine.. Its pathway is protein modification; protein ubiquitination. Its function is as follows. E3 ubiquitin-protein ligase that negatively regulates water stress response. May control in coordination with PUB23 a drought signaling pathway by ubiquitinating cytosolic RPN12a. Acts as a negative regulator of the immunity triggered by the pathogen-associated molecular patterns (PAMPs), in association with PUB22 and PUB24. The chain is E3 ubiquitin-protein ligase PUB23 (PUB23) from Arabidopsis thaliana (Mouse-ear cress).